Consider the following 565-residue polypeptide: NAD-dependent malic enzyme (565 aa).

Tyr104 acts as the Proton donor in catalysis. Arg157 contacts NAD(+). Lys175 serves as the catalytic Proton acceptor. A divalent metal cation-binding residues include Glu246, Asp247, and Asp270. Residues Asp270 and Asn418 each coordinate NAD(+).

This sequence belongs to the malic enzymes family. As to quaternary structure, homotetramer. It depends on Mg(2+) as a cofactor. Requires Mn(2+) as cofactor.

It catalyses the reaction (S)-malate + NAD(+) = pyruvate + CO2 + NADH. The enzyme catalyses oxaloacetate + H(+) = pyruvate + CO2. The sequence is that of NAD-dependent malic enzyme from Shigella flexneri serotype 5b (strain 8401).